The following is a 323-amino-acid chain: Thymidylate synthase (323 aa).

DUMP is bound by residues Arg-21 and 172-173; that span reads RR. Residue Cys-192 is the Nucleophile of the active site. Residues 214-217, Asn-225, and 255-257 each bind dUMP; these read RSND and HVY. Position 217 (Asp-217) interacts with (6R)-5,10-methylene-5,6,7,8-tetrahydrofolate. (6R)-5,10-methylene-5,6,7,8-tetrahydrofolate is bound at residue Ala-322.

The protein belongs to the thymidylate synthase family. Bacterial-type ThyA subfamily. As to quaternary structure, homodimer.

The protein localises to the cytoplasm. It catalyses the reaction dUMP + (6R)-5,10-methylene-5,6,7,8-tetrahydrofolate = 7,8-dihydrofolate + dTMP. The protein operates within pyrimidine metabolism; dTTP biosynthesis. Functionally, catalyzes the reductive methylation of 2'-deoxyuridine-5'-monophosphate (dUMP) to 2'-deoxythymidine-5'-monophosphate (dTMP) while utilizing 5,10-methylenetetrahydrofolate (mTHF) as the methyl donor and reductant in the reaction, yielding dihydrofolate (DHF) as a by-product. This enzymatic reaction provides an intracellular de novo source of dTMP, an essential precursor for DNA biosynthesis. The sequence is that of Thymidylate synthase from Pseudomonas syringae pv. tomato (strain ATCC BAA-871 / DC3000).